Here is a 901-residue protein sequence, read N- to C-terminus: Protein translocase subunit SecA (901 aa).

ATP-binding positions include Gln87, 105 to 109, and Asp512; that span reads GEGKT. Positions 859 to 901 are disordered; that stretch reads HQDDDSAAAAALAAQTGERKVGRNDPCPCGSGKKYKQCHGRLQ. Zn(2+)-binding residues include Cys885, Cys887, Cys896, and His897. Residues 891–901 show a composition bias toward basic residues; sequence KKYKQCHGRLQ.

Belongs to the SecA family. As to quaternary structure, monomer and homodimer. Part of the essential Sec protein translocation apparatus which comprises SecA, SecYEG and auxiliary proteins SecDF-YajC and YidC. It depends on Zn(2+) as a cofactor.

It is found in the cell inner membrane. Its subcellular location is the cytoplasm. The enzyme catalyses ATP + H2O + cellular proteinSide 1 = ADP + phosphate + cellular proteinSide 2.. In terms of biological role, part of the Sec protein translocase complex. Interacts with the SecYEG preprotein conducting channel. Has a central role in coupling the hydrolysis of ATP to the transfer of proteins into and across the cell membrane, serving both as a receptor for the preprotein-SecB complex and as an ATP-driven molecular motor driving the stepwise translocation of polypeptide chains across the membrane. This Escherichia coli O6:K15:H31 (strain 536 / UPEC) protein is Protein translocase subunit SecA.